A 344-amino-acid chain; its full sequence is Phosphoribosylformylglycinamidine cyclo-ligase (344 aa).

Belongs to the AIR synthase family.

It localises to the cytoplasm. The enzyme catalyses 2-formamido-N(1)-(5-O-phospho-beta-D-ribosyl)acetamidine + ATP = 5-amino-1-(5-phospho-beta-D-ribosyl)imidazole + ADP + phosphate + H(+). It participates in purine metabolism; IMP biosynthesis via de novo pathway; 5-amino-1-(5-phospho-D-ribosyl)imidazole from N(2)-formyl-N(1)-(5-phospho-D-ribosyl)glycinamide: step 2/2. This Bifidobacterium animalis subsp. lactis (strain AD011) protein is Phosphoribosylformylglycinamidine cyclo-ligase.